The primary structure comprises 608 residues: Microtubule-associated protein VP7 (608 aa).

The protein localises to the virion. It localises to the host cytoplasm. Its subcellular location is the host cytoskeleton. Its function is as follows. Minor inner capsid component. Displays NTPase and RNA 5'-triphosphatase (RTPase) activities. May function as a cofactor of polymerase. Associates with microtubules and plays a role in the formation, structural organization and morphology of viral inclusions, where the assembly of cores and the replication of viral RNA occur. The sequence is that of Microtubule-associated protein VP7 from Oryza latifolia (Indian wild rice).